A 124-amino-acid chain; its full sequence is Histone H2B 1/2 (124 aa).

The tract at residues 1 to 32 (MPEPAKAAPKKGSKKAVTKTAGKGGKKRKRTR) is disordered. N6-acetyllysine is present on residues Lys-6 and Lys-11. Positions 8–17 (APKKGSKKAV) are enriched in basic residues. Ser-13 is subject to Phosphoserine. Residues Lys-14 and Lys-19 each carry the N6-acetyllysine modification. Residue Ser-111 is glycosylated (O-linked (GlcNAc) serine). A Glycyl lysine isopeptide (Lys-Gly) (interchain with G-Cter in ubiquitin) cross-link involves residue Lys-119.

It belongs to the histone H2B family. In terms of assembly, the nucleosome is a histone octamer containing two molecules each of H2A, H2B, H3 and H4 assembled in one H3-H4 heterotetramer and two H2A-H2B heterodimers. The octamer wraps approximately 147 bp of DNA. In terms of processing, monoubiquitination of Lys-119 by the BRE1 gives a specific tag for epigenetic transcriptional activation and is also prerequisite for histone H3 'Lys-4' and 'Lys-79' methylation. Phosphorylated during apoptosis; which facilitates apoptotic chromatin condensation. Post-translationally, glcNAcylation at Ser-111 promotes monoubiquitination of Lys-119. It fluctuates in response to extracellular glucose, and associates with transcribed genes.

Its subcellular location is the nucleus. It is found in the chromosome. Functionally, core component of nucleosome. Nucleosomes wrap and compact DNA into chromatin, limiting DNA accessibility to the cellular machineries which require DNA as a template. Histones thereby play a central role in transcription regulation, DNA repair, DNA replication and chromosomal stability. DNA accessibility is regulated via a complex set of post-translational modifications of histones, also called histone code, and nucleosome remodeling. The chain is Histone H2B 1/2 from Danio rerio (Zebrafish).